The chain runs to 474 residues: tRNA-2-methylthio-N(6)-dimethylallyladenosine synthase (474 aa).

Residues 3 to 120 (KKLYIKTFGC…LPQMISTRQI (118 aa)) form the MTTase N-terminal domain. The [4Fe-4S] cluster site is built by Cys-12, Cys-49, Cys-83, Cys-157, Cys-161, and Cys-164. A Radical SAM core domain is found at 143–382 (RTEGVTAFVS…ELQAQAISVR (240 aa)). One can recognise a TRAM domain in the interval 381–444 (VRMVGTTQRV…SHTLRGENVR (64 aa)).

This sequence belongs to the methylthiotransferase family. MiaB subfamily. Monomer. [4Fe-4S] cluster is required as a cofactor.

It localises to the cytoplasm. It catalyses the reaction N(6)-dimethylallyladenosine(37) in tRNA + (sulfur carrier)-SH + AH2 + 2 S-adenosyl-L-methionine = 2-methylsulfanyl-N(6)-dimethylallyladenosine(37) in tRNA + (sulfur carrier)-H + 5'-deoxyadenosine + L-methionine + A + S-adenosyl-L-homocysteine + 2 H(+). Its function is as follows. Catalyzes the methylthiolation of N6-(dimethylallyl)adenosine (i(6)A), leading to the formation of 2-methylthio-N6-(dimethylallyl)adenosine (ms(2)i(6)A) at position 37 in tRNAs that read codons beginning with uridine. This Nitrosospira multiformis (strain ATCC 25196 / NCIMB 11849 / C 71) protein is tRNA-2-methylthio-N(6)-dimethylallyladenosine synthase.